A 198-amino-acid polypeptide reads, in one-letter code: MKVFGISGSPRLQGTHFAVNYALNYLKEKGAEVRYFSVSRKKINFCLHCDYCIKKKEGCIHKDDMEEVYENLIWADGVIIGTPVYQGNVTGQLKTLMDRCRAILAKNPKVLRGRVGMAIAVGGDRNGGQEIALRTIHDFFIINEMIPVGGGSFGANLGATFWSKDRGKKGVEEDEEGLRVLRKTLNRFYEVLKEKRGL.

C46, C49, C52, and C59 together coordinate [4Fe-4S] cluster.

The protein belongs to the SsuE family. Isf subfamily. In terms of assembly, homodimer. FMN serves as cofactor. The cofactor is [4Fe-4S] cluster.

Its function is as follows. Redox-active protein probably involved in electron transport. This is Iron-sulfur flavoprotein MJ0731 from Methanocaldococcus jannaschii (strain ATCC 43067 / DSM 2661 / JAL-1 / JCM 10045 / NBRC 100440) (Methanococcus jannaschii).